Reading from the N-terminus, the 493-residue chain is Guanosine-5'-triphosphate,3'-diphosphate pyrophosphatase (493 aa).

Belongs to the GppA/Ppx family. GppA subfamily.

The enzyme catalyses guanosine 3'-diphosphate 5'-triphosphate + H2O = guanosine 3',5'-bis(diphosphate) + phosphate + H(+). It functions in the pathway purine metabolism; ppGpp biosynthesis; ppGpp from GTP: step 2/2. Catalyzes the conversion of pppGpp to ppGpp. Guanosine pentaphosphate (pppGpp) is a cytoplasmic signaling molecule which together with ppGpp controls the 'stringent response', an adaptive process that allows bacteria to respond to amino acid starvation, resulting in the coordinated regulation of numerous cellular activities. The polypeptide is Guanosine-5'-triphosphate,3'-diphosphate pyrophosphatase (Salmonella choleraesuis (strain SC-B67)).